Reading from the N-terminus, the 339-residue chain is Anthranilate phosphoribosyltransferase (339 aa).

5-phospho-alpha-D-ribose 1-diphosphate contacts are provided by residues G79, 82–83 (GD), T87, 89–92 (NVST), 107–115 (KHGNRSVSS), and S119. An anthranilate-binding site is contributed by G79. S91 contacts Mg(2+). N110 provides a ligand contact to anthranilate. Residue R165 coordinates anthranilate. Residues D224 and E225 each contribute to the Mg(2+) site.

Belongs to the anthranilate phosphoribosyltransferase family. In terms of assembly, homodimer. Mg(2+) serves as cofactor.

It catalyses the reaction N-(5-phospho-beta-D-ribosyl)anthranilate + diphosphate = 5-phospho-alpha-D-ribose 1-diphosphate + anthranilate. Its pathway is amino-acid biosynthesis; L-tryptophan biosynthesis; L-tryptophan from chorismate: step 2/5. Its function is as follows. Catalyzes the transfer of the phosphoribosyl group of 5-phosphorylribose-1-pyrophosphate (PRPP) to anthranilate to yield N-(5'-phosphoribosyl)-anthranilate (PRA). This is Anthranilate phosphoribosyltransferase from Caldivirga maquilingensis (strain ATCC 700844 / DSM 13496 / JCM 10307 / IC-167).